The sequence spans 329 residues: Quinate dehydrogenase (329 aa).

It carries out the reaction L-quinate + NAD(+) = 3-dehydroquinate + NADH + H(+). It participates in aromatic compound metabolism; 3,4-dihydroxybenzoate biosynthesis; 3-dehydroquinate from D-quinate (NAD(+) route): step 1/1. This Emericella nidulans (strain FGSC A4 / ATCC 38163 / CBS 112.46 / NRRL 194 / M139) (Aspergillus nidulans) protein is Quinate dehydrogenase (qutB).